Consider the following 383-residue polypeptide: DNA-directed RNA polymerase subunit alpha (383 aa).

The interval 1 to 240 (MEKKTGLIQF…NLFHQISPPL (240 aa)) is alpha N-terminal domain (alpha-NTD). The tract at residues 306-383 (IDKQMNDSVN…RFNMELLPTK (78 aa)) is alpha C-terminal domain (alpha-CTD).

The protein belongs to the RNA polymerase alpha chain family. As to quaternary structure, in plastids the minimal PEP RNA polymerase catalytic core is composed of four subunits: alpha, beta, beta', and beta''. When a (nuclear-encoded) sigma factor is associated with the core the holoenzyme is formed, which can initiate transcription.

The protein resides in the plastid. Its subcellular location is the chloroplast. The enzyme catalyses RNA(n) + a ribonucleoside 5'-triphosphate = RNA(n+1) + diphosphate. In terms of biological role, DNA-dependent RNA polymerase catalyzes the transcription of DNA into RNA using the four ribonucleoside triphosphates as substrates. The chain is DNA-directed RNA polymerase subunit alpha from Staurastrum punctulatum (Green alga).